Consider the following 345-residue polypeptide: Protein RecA (345 aa).

Position 65–72 (65–72) interacts with ATP; sequence GPESSGKT.

This sequence belongs to the RecA family.

It is found in the cytoplasm. In terms of biological role, can catalyze the hydrolysis of ATP in the presence of single-stranded DNA, the ATP-dependent uptake of single-stranded DNA by duplex DNA, and the ATP-dependent hybridization of homologous single-stranded DNAs. It interacts with LexA causing its activation and leading to its autocatalytic cleavage. The polypeptide is Protein RecA (Sulfurimonas denitrificans (strain ATCC 33889 / DSM 1251) (Thiomicrospira denitrificans (strain ATCC 33889 / DSM 1251))).